We begin with the raw amino-acid sequence, 252 residues long: Transcriptional regulatory protein HptR (252 aa).

Positions 3 to 118 (KVVICDDERI…QLEVILGRLV (116 aa)) constitute a Response regulatory domain. Asp-55 is modified (4-aspartylphosphate). The HTH araC/xylS-type domain maps to 153–250 (NQIVDQIKQS…QMAPSDYCKQ (98 aa)). 2 consecutive DNA-binding regions (H-T-H motif) follow at residues 170-191 (SDLI…KDHV) and 217-240 (HYEI…KKYL).

Phosphorylated by HptS.

The protein resides in the cytoplasm. Its function is as follows. Member of the two-component regulatory system HptS/HptR that regulates genes involved in hexose phosphate transport system in response to changes in extracellular phosphate sources. Activates uhpT expression to facilitate glucose-6-phosphate/G6P utilization by directly binding to its promoter. Antagonizes CcpA-dependent transcription of a subset of CcpA-regulated genes involved in antibiotic susceptibility. The protein is Transcriptional regulatory protein HptR (hptR) of Staphylococcus aureus (strain bovine RF122 / ET3-1).